A 422-amino-acid chain; its full sequence is Adenylosuccinate synthetase (422 aa).

Residues 11–17 (GDEGKGK) and 39–41 (GHT) contribute to the GTP site. Asp-12 (proton acceptor) is an active-site residue. The Mg(2+) site is built by Asp-12 and Gly-39. Residues 12–15 (DEGK), 37–40 (NAGH), Thr-129, Arg-143, Asn-220, Thr-235, and Arg-299 each bind IMP. His-40 (proton donor) is an active-site residue. Residue 295–301 (VTTGRKR) coordinates substrate. Residues Arg-301, 327–329 (KLD), and 410–412 (GTG) contribute to the GTP site.

The protein belongs to the adenylosuccinate synthetase family. Homodimer. Requires Mg(2+) as cofactor.

It localises to the cytoplasm. It catalyses the reaction IMP + L-aspartate + GTP = N(6)-(1,2-dicarboxyethyl)-AMP + GDP + phosphate + 2 H(+). Its pathway is purine metabolism; AMP biosynthesis via de novo pathway; AMP from IMP: step 1/2. Plays an important role in the de novo pathway and in the salvage pathway of purine nucleotide biosynthesis. Catalyzes the first committed step in the biosynthesis of AMP from IMP. This is Adenylosuccinate synthetase from Arthroderma otae (strain ATCC MYA-4605 / CBS 113480) (Microsporum canis).